The following is a 392-amino-acid chain: Cell division protein FtsZ (392 aa).

Residues 24–28 (GGGCN), 111–113 (GTG), Glu142, Arg145, and Asp189 contribute to the GTP site.

This sequence belongs to the FtsZ family. As to quaternary structure, homodimer. Polymerizes to form a dynamic ring structure in a strictly GTP-dependent manner. Interacts directly with several other division proteins.

Its subcellular location is the cytoplasm. Its function is as follows. Essential cell division protein that forms a contractile ring structure (Z ring) at the future cell division site. The regulation of the ring assembly controls the timing and the location of cell division. One of the functions of the FtsZ ring is to recruit other cell division proteins to the septum to produce a new cell wall between the dividing cells. Binds GTP and shows GTPase activity. This Neisseria gonorrhoeae protein is Cell division protein FtsZ.